A 906-amino-acid chain; its full sequence is Protein translocase subunit SecA (906 aa).

ATP is bound by residues glutamine 86, 104–108 (GEGKT), and aspartate 499. The segment covering 834–847 (KLQKNMRESREDPA) has biased composition (basic and acidic residues). A disordered region spans residues 834–887 (KLQKNMRESREDPAFSKYNAGSSLETDLKPVVSRVDPKDRNPDDPTSWGRVSRN). Positions 890, 892, 901, and 902 each coordinate Zn(2+).

Belongs to the SecA family. As to quaternary structure, monomer and homodimer. Part of the essential Sec protein translocation apparatus which comprises SecA, SecYEG and auxiliary proteins SecDF-YajC and YidC. Requires Zn(2+) as cofactor.

The protein resides in the cell inner membrane. Its subcellular location is the cytoplasm. The catalysed reaction is ATP + H2O + cellular proteinSide 1 = ADP + phosphate + cellular proteinSide 2.. Functionally, part of the Sec protein translocase complex. Interacts with the SecYEG preprotein conducting channel. Has a central role in coupling the hydrolysis of ATP to the transfer of proteins into and across the cell membrane, serving both as a receptor for the preprotein-SecB complex and as an ATP-driven molecular motor driving the stepwise translocation of polypeptide chains across the membrane. This is Protein translocase subunit SecA from Rickettsia felis (strain ATCC VR-1525 / URRWXCal2) (Rickettsia azadi).